The sequence spans 171 residues: Large ribosomal subunit protein uL10 (171 aa).

This sequence belongs to the universal ribosomal protein uL10 family. Part of the ribosomal stalk of the 50S ribosomal subunit. The N-terminus interacts with L11 and the large rRNA to form the base of the stalk. The C-terminus forms an elongated spine to which L12 dimers bind in a sequential fashion forming a multimeric L10(L12)X complex.

In terms of biological role, forms part of the ribosomal stalk, playing a central role in the interaction of the ribosome with GTP-bound translation factors. The polypeptide is Large ribosomal subunit protein uL10 (rplJ) (Lactococcus lactis subsp. lactis (strain IL1403) (Streptococcus lactis)).